The sequence spans 926 residues: BTB/POZ domain-containing protein KCTD19 (926 aa).

The region spanning 18-72 (NVGGWHFSVPRSKLSQFPDSLLWKEASALTSSESQRLFIDRDGSTFRHVHYYLYT) is the BTB 1 domain. At Ser-270 the chain carries Phosphoserine. Residues 398-485 (IKVYVGSHWY…YHIPSLSEAL (88 aa)) form the BTB 2 domain. The interval 673-751 (GSEAASQPST…PAPEQPLPEA (79 aa)) is disordered. The segment covering 730–742 (DWSKQRTKERESP) has biased composition (basic and acidic residues).

As to quaternary structure, identified in a complex with ZNF541, HDAC1 and HSPA2. Identified in a complex with ZNF541 and HDAC1. Identified in a complex with HDAC1, HDAC2, DNTTIP1 and ZNF541.

It is found in the nucleus. Functionally, transcription regulator which is essential for male fertility and for the completion of meiotic prophase in spermatocytes. Regulates progression of the pachytene stage of meiotic prophase and promotes the transcriptional activation activity ZNF541. Required for the organization of chromosomes during metaphase I. In Homo sapiens (Human), this protein is BTB/POZ domain-containing protein KCTD19 (KCTD19).